Reading from the N-terminus, the 1094-residue chain is Probable arabinosyltransferase C (1094 aa).

Helical transmembrane passes span 28–50 (IARY…TPLL), 232–251 (AAMI…LHIL), 264–286 (PARW…WWHF), 341–360 (SIWM…WVIS), 373–392 (TSRA…WLPL), 431–453 (IGAL…LVAI), 466–488 (RFGV…IPIF), 530–552 (SIAR…AMSL), 565–582 (SRRI…MMFT), 586–608 (WTHH…AVAV), 620–642 (TVFA…GWWY), 657–679 (WRWS…AAWF), and 700–722 (LAGI…EVVS). Low complexity predominate over residues 817–831 (GSEPGTEGGTTAAPG). Positions 817–836 (GSEPGTEGGTTAAPGINGSR) are disordered.

This sequence belongs to the emb family.

Its subcellular location is the cell membrane. Arabinosyl transferase responsible for the polymerization of arabinose into the arabinan of arabinogalactan. In Mycobacterium tuberculosis (strain ATCC 25618 / H37Rv), this protein is Probable arabinosyltransferase C (embC).